A 210-amino-acid polypeptide reads, in one-letter code: Small ribosomal subunit protein uS4 (210 aa).

The region spanning 99–170 (RRLDNAVFRA…NLEAVVRRGV (72 aa)) is the S4 RNA-binding domain.

This sequence belongs to the universal ribosomal protein uS4 family. Part of the 30S ribosomal subunit. Contacts protein S5. The interaction surface between S4 and S5 is involved in control of translational fidelity.

In terms of biological role, one of the primary rRNA binding proteins, it binds directly to 16S rRNA where it nucleates assembly of the body of the 30S subunit. Its function is as follows. With S5 and S12 plays an important role in translational accuracy. This chain is Small ribosomal subunit protein uS4, found in Desulfotalea psychrophila (strain LSv54 / DSM 12343).